A 548-amino-acid polypeptide reads, in one-letter code: Tau-cadinol synthase (548 aa).

D303 and D307 together coordinate Mg(2+). Substrate is bound by residues D303, D307, and R443. The short motif at 303–307 (DDTYD) is the DDXXD motif element.

Belongs to the terpene synthase family. As to quaternary structure, monomer. Requires Mg(2+) as cofactor. It depends on Mn(2+) as a cofactor. Constitutively expressed in aerial tissues, but barely observed in roots.

It is found in the cytoplasm. It catalyses the reaction (2E,6E)-farnesyl diphosphate + H2O = tau-cadinol + diphosphate. Its pathway is secondary metabolite biosynthesis; terpenoid biosynthesis. Its function is as follows. Sesquiterpene synthase that catalyzes the formation of a blend of sesquiterpenes and sesquiterpenoid alcohols. Converts farnesyl diphosphate to tau-cadinol. This Zea mays (Maize) protein is Tau-cadinol synthase.